The following is a 129-amino-acid chain: Succinate dehydrogenase assembly factor 3, mitochondrial (129 aa).

It belongs to the complex I LYR family. SDHAF3 subfamily. As to quaternary structure, interacts with the iron-sulfur protein subunit within the SDH catalytic dimer.

Its subcellular location is the mitochondrion matrix. Plays an essential role in the assembly of succinate dehydrogenase (SDH), an enzyme complex (also referred to as respiratory complex II) that is a component of both the tricarboxylic acid (TCA) cycle and the mitochondrial electron transport chain, and which couples the oxidation of succinate to fumarate with the reduction of ubiquinone (coenzyme Q) to ubiquinol. Promotes maturation of the iron-sulfur protein subunit of the SDH catalytic dimer, protecting it from the deleterious effects of oxidants. May act together with SDHAF1. This Aspergillus fumigatus (strain ATCC MYA-4609 / CBS 101355 / FGSC A1100 / Af293) (Neosartorya fumigata) protein is Succinate dehydrogenase assembly factor 3, mitochondrial.